Consider the following 207-residue polypeptide: Guanylate kinase (207 aa).

The Guanylate kinase-like domain occupies 4 to 184; it reads GTLYIVSAPS…ALMDFKAIIR (181 aa). An ATP-binding site is contributed by 11–18; the sequence is APSGAGKS.

It belongs to the guanylate kinase family.

The protein localises to the cytoplasm. It carries out the reaction GMP + ATP = GDP + ADP. In terms of biological role, essential for recycling GMP and indirectly, cGMP. The protein is Guanylate kinase of Vibrio vulnificus (strain CMCP6).